Reading from the N-terminus, the 228-residue chain is uncharacterized protein (228 aa).

Residues 1–34 (MPRDTKPYSRPANAPRPGVKTERSNQFKAASTKY) are disordered.

This is an uncharacterized protein from Orgyia pseudotsugata (Douglas-fir tussock moth).